Here is a 470-residue protein sequence, read N- to C-terminus: Argininosuccinate lyase (470 aa).

Belongs to the lyase 1 family. Argininosuccinate lyase subfamily.

The protein resides in the cytoplasm. The enzyme catalyses 2-(N(omega)-L-arginino)succinate = fumarate + L-arginine. It participates in amino-acid biosynthesis; L-arginine biosynthesis; L-arginine from L-ornithine and carbamoyl phosphate: step 3/3. This Synechococcus sp. (strain WH7803) protein is Argininosuccinate lyase.